The primary structure comprises 277 residues: Hemin import ATP-binding protein HmuV (277 aa).

In terms of domain architecture, ABC transporter spans 19 to 259 (VEVADLNYSV…AIIEEAFGHR (241 aa)). ATP is bound at residue 51-58 (GRNGAGKS).

The protein belongs to the ABC transporter superfamily. Heme (hemin) importer (TC 3.A.1.14.5) family. In terms of assembly, the complex is composed of two ATP-binding proteins (HmuV), two transmembrane proteins (HmuU) and a solute-binding protein (HmuT).

It is found in the cell membrane. Functionally, part of the ABC transporter complex HmuTUV involved in hemin import. Responsible for energy coupling to the transport system. The sequence is that of Hemin import ATP-binding protein HmuV from Deinococcus geothermalis (strain DSM 11300 / CIP 105573 / AG-3a).